We begin with the raw amino-acid sequence, 61 residues long: Small ribosomal subunit protein uS14 (61 aa).

The Zn(2+) site is built by Cys24, Cys27, Cys40, and Cys43.

It belongs to the universal ribosomal protein uS14 family. Zinc-binding uS14 subfamily. Part of the 30S ribosomal subunit. Contacts proteins S3 and S10. Zn(2+) serves as cofactor.

Functionally, binds 16S rRNA, required for the assembly of 30S particles and may also be responsible for determining the conformation of the 16S rRNA at the A site. In Syntrophobacter fumaroxidans (strain DSM 10017 / MPOB), this protein is Small ribosomal subunit protein uS14.